The sequence spans 405 residues: Venom serine protease 34 (405 aa).

Positions 1 to 35 are cleaved as a signal peptide; that stretch reads MIFTNNIAAFQNVVLVKKVKIVLLIFYGSIMFSMT. Disulfide bonds link Cys-42–Cys-70 and Cys-95–Cys-111. One can recognise a CUB domain in the interval 42–147; sequence CDYYQNLNLG…EVRPIKRVKD (106 aa). N-linked (GlcNAc...) asparagine glycosylation is present at Asn-113. Residues 161–397 enclose the Peptidase S1 domain; that stretch reads IVGGTNTGIN…YIDWIVSQTP (237 aa). An intrachain disulfide couples Cys-188 to Cys-204. Catalysis depends on His-203, which acts as the Charge relay system. N-linked (GlcNAc...) asparagine glycosylation is found at Asn-209 and Asn-229. Asp-257 acts as the Charge relay system in catalysis. 2 cysteine pairs are disulfide-bonded: Cys-323-Cys-336 and Cys-345-Cys-375. Ser-349 serves as the catalytic Charge relay system.

Belongs to the peptidase S1 family. In terms of tissue distribution, expressed by the venom duct.

Its subcellular location is the secreted. This Apis mellifera (Honeybee) protein is Venom serine protease 34.